The sequence spans 724 residues: ATPase family protein 2 homolog (724 aa).

ATP is bound by residues 281–287 and 503–508; these read PGSGKTL and GCSKTL.

Belongs to the AAA ATPase family. AFG2 subfamily. As to quaternary structure, homohexamer; ATP binding induces oligomerization. Forms a ring-shaped particle of about 12 nm diameter, that displays 6-fold radial symmetry. Interacts (via N-terminus) with kinase air-2; the interaction is direct and inhibits air-2 kinase activity in an ATPase-dependent manner.

The protein localises to the cytoplasm. It catalyses the reaction ATP + H2O = ADP + phosphate + H(+). In terms of biological role, ATP-dependent chaperone which uses the energy provided by ATP hydrolysis to generate mechanical force to disassemble protein complexes. Required for various steps of embryonic mitosis including centrosome duplication, spindle assembly, ER dynamics and cell cycle progression. Regulates the stability and activity of kinase air-2, a component of the chromosomal passenger complex (CPC). Inhibits air-2 kinase activity from metaphase to late telophase and negatively regulates air-2 stability during mitotic exit. Controls ER transition into sheet-like structures at the onset of mitosis, possibly by regulating homotypic membrane fusion. This chain is ATPase family protein 2 homolog, found in Caenorhabditis elegans.